Here is a 408-residue protein sequence, read N- to C-terminus: 4-hydroxy-3-methylbut-2-en-1-yl diphosphate synthase (ferredoxin) (408 aa).

A compositionally biased stretch (polar residues) spans 1-21 (MQTLPTPTTSSNTANQSTFDT). A disordered region spans residues 1 to 26 (MQTLPTPTTSSNTANQSTFDTTIKRR). [4Fe-4S] cluster contacts are provided by Cys-317, Cys-320, Cys-351, and Glu-358.

It belongs to the IspG family. The cofactor is [4Fe-4S] cluster.

The catalysed reaction is (2E)-4-hydroxy-3-methylbut-2-enyl diphosphate + 2 oxidized [2Fe-2S]-[ferredoxin] + H2O = 2-C-methyl-D-erythritol 2,4-cyclic diphosphate + 2 reduced [2Fe-2S]-[ferredoxin] + H(+). It participates in isoprenoid biosynthesis; isopentenyl diphosphate biosynthesis via DXP pathway; isopentenyl diphosphate from 1-deoxy-D-xylulose 5-phosphate: step 5/6. Functionally, converts 2C-methyl-D-erythritol 2,4-cyclodiphosphate (ME-2,4cPP) into 1-hydroxy-2-methyl-2-(E)-butenyl 4-diphosphate. The sequence is that of 4-hydroxy-3-methylbut-2-en-1-yl diphosphate synthase (ferredoxin) from Trichormus variabilis (strain ATCC 29413 / PCC 7937) (Anabaena variabilis).